We begin with the raw amino-acid sequence, 40 residues long: ANTAFVSSAHNTQKIPAGAPFNRNLRAMLADLRQNAAFAG.

The Gnk2-homologous domain maps to 3-40 (TAFVSSAHNTQKIPAGAPFNRNLRAMLADLRQNAAFAG). N11 is an alpha-D-mannopyranose binding site.

In terms of tissue distribution, expressed in seeds (at the protein level).

Possesses antifungal activity against B.cinerea, M.arachidicola, F.oxysporum, R.solani and C.comatus and moderate antibacterial activity against S.aureus, P.aeruginosa and E.coli. Inhibits HIV-1 reverse transcriptase and proliferation of murine splenocytes. Exerts antifungal activity through its carbohydrate-binding specificity. This Ginkgo biloba (Ginkgo) protein is Antifungal protein ginkbilobin-1.